The sequence spans 423 residues: Gamma-glutamyl phosphate reductase (423 aa).

Belongs to the gamma-glutamyl phosphate reductase family.

It localises to the cytoplasm. The catalysed reaction is L-glutamate 5-semialdehyde + phosphate + NADP(+) = L-glutamyl 5-phosphate + NADPH + H(+). Its pathway is amino-acid biosynthesis; L-proline biosynthesis; L-glutamate 5-semialdehyde from L-glutamate: step 2/2. Functionally, catalyzes the NADPH-dependent reduction of L-glutamate 5-phosphate into L-glutamate 5-semialdehyde and phosphate. The product spontaneously undergoes cyclization to form 1-pyrroline-5-carboxylate. This chain is Gamma-glutamyl phosphate reductase, found in Pseudomonas putida (strain GB-1).